Here is a 535-residue protein sequence, read N- to C-terminus: Bifunctional purine biosynthesis protein PurH (535 aa).

An MGS-like domain is found at 6–151 (TRLPIRRALI…KNHKDVAIVV (146 aa)).

It belongs to the PurH family.

It carries out the reaction (6R)-10-formyltetrahydrofolate + 5-amino-1-(5-phospho-beta-D-ribosyl)imidazole-4-carboxamide = 5-formamido-1-(5-phospho-D-ribosyl)imidazole-4-carboxamide + (6S)-5,6,7,8-tetrahydrofolate. The catalysed reaction is IMP + H2O = 5-formamido-1-(5-phospho-D-ribosyl)imidazole-4-carboxamide. It functions in the pathway purine metabolism; IMP biosynthesis via de novo pathway; 5-formamido-1-(5-phospho-D-ribosyl)imidazole-4-carboxamide from 5-amino-1-(5-phospho-D-ribosyl)imidazole-4-carboxamide (10-formyl THF route): step 1/1. It participates in purine metabolism; IMP biosynthesis via de novo pathway; IMP from 5-formamido-1-(5-phospho-D-ribosyl)imidazole-4-carboxamide: step 1/1. The chain is Bifunctional purine biosynthesis protein PurH from Pseudomonas fluorescens (strain SBW25).